Reading from the N-terminus, the 245-residue chain is Small ribosomal subunit protein uS2 (245 aa).

The tract at residues Gly-226–Ala-245 is disordered.

The protein belongs to the universal ribosomal protein uS2 family.

The protein is Small ribosomal subunit protein uS2 of Erythrobacter litoralis (strain HTCC2594).